Reading from the N-terminus, the 344-residue chain is MAAMLKATERHFYFHGREGYEVERNNCHWCQIRAFPTHSTLPVTVVNEQDDEVLPDDFRFINNVVLGKGVEQAGDSFRSGCSCAKDSECQYTSCHCLADLEDDDSSDEEEFDAFGDKIERTTPKPRRIAYAYHSHGAKAGLLRSKFHNSKMPIYECHQSCSCSIDCPNRVVERGRTIPLEIFRTPDRGWGVRSPVSIKKGQFVDRYLGEIITSNEADRRRSQSVISQRKDVYLFALDKFTDPDSFDHRLKGPSLEVDGEFMSGPTRFVNHSCDPNMRIFARVGDHADKHIHDLALFAIKDIPEGEELTFDYVDGVSHEGEESGGDIDHMTRCLCGSKKCRKFLW.

Residues 79 to 174 (SGCSCAKDSE…DCPNRVVERG (96 aa)) form the Pre-SET domain. Residues C81, C83, C89, C94, C96, C156, C160, C162, C166, and C272 each contribute to the Zn(2+) site. Positions 177–312 (IPLEIFRTPD…EGEELTFDYV (136 aa)) constitute an SET domain. Y311 lines the S-adenosyl-L-methionine pocket. Positions 328 to 344 (HMTRCLCGSKKCRKFLW) constitute a Post-SET domain. Zn(2+) is bound by residues C332, C334, and C339.

This sequence belongs to the class V-like SAM-binding methyltransferase superfamily.

Its subcellular location is the chromosome. It carries out the reaction L-lysyl(9)-[histone H3] + 3 S-adenosyl-L-methionine = N(6),N(6),N(6)-trimethyl-L-lysyl(9)-[histone H3] + 3 S-adenosyl-L-homocysteine + 3 H(+). In terms of biological role, histone methyltransferase that specifically trimethylates histone H3 to form H3K9me3. H3K9me3 marks chromatin regions for DNA methylation. Plays a key role in the regulation of the biosynthesis of the gamma-pyrones fusapyrone (FPY) and deoxyfusapyrone (dFPY). This chain is Histone-lysine N-methyltransferase, H3 lysine-9 specific KMT1, found in Fusarium mangiferae (Mango malformation disease fungus).